The following is a 625-amino-acid chain: UvrABC system protein C (625 aa).

Residues 26-105 (LEPGVYFLRD…IKQHQPHFNT (80 aa)) enclose the GIY-YIG domain. Residues 215–250 (GELLEKLATKMLAASENLDFEQAATIRDQIRGLQAL) enclose the UVR domain.

Belongs to the UvrC family. In terms of assembly, interacts with UvrB in an incision complex.

It localises to the cytoplasm. In terms of biological role, the UvrABC repair system catalyzes the recognition and processing of DNA lesions. UvrC both incises the 5' and 3' sides of the lesion. The N-terminal half is responsible for the 3' incision and the C-terminal half is responsible for the 5' incision. This Microcystis aeruginosa (strain NIES-843 / IAM M-2473) protein is UvrABC system protein C.